Here is a 145-residue protein sequence, read N- to C-terminus: Histone H2B.1, sperm (145 aa).

Positions Met-1–Arg-52 are disordered. Short sequence motifs (SPKK motif) lie at residues Ser-6 to Lys-9, Ser-11 to Lys-14, Ser-16 to Lys-19, and Ser-21 to Lys-24. Composition is skewed to basic residues over residues Pro-7–Pro-22 and Lys-30–Arg-52. Ser-16 and Ser-21 each carry phosphoserine. O-linked (GlcNAc) serine glycosylation is present at Ser-132. A Glycyl lysine isopeptide (Lys-Gly) (interchain with G-Cter in ubiquitin) cross-link involves residue Lys-140.

This sequence belongs to the histone H2B family. In terms of assembly, the nucleosome is a histone octamer containing two molecules each of H2A, H2B, H3 and H4 assembled in one H3-H4 heterotetramer and two H2A-H2B heterodimers. The octamer wraps approximately 147 bp of DNA. Post-translationally, monoubiquitination of Lys-140 gives a specific tag for epigenetic transcriptional activation and is also prerequisite for histone H3 'Lys-4' and 'Lys-79' methylation. Phosphorylated on SPKK motifs 3 and 4; which may regulate DNA binding. Dephosphorylated during maturation of spermatids to mature sperm and rephosphorylated at fertilization. In terms of processing, glcNAcylation at Ser-132 promotes monoubiquitination of Lys-140. It fluctuates in response to extracellular glucose, and associates with transcribed genes.

The protein resides in the nucleus. It localises to the chromosome. Its function is as follows. Core component of nucleosome. Nucleosomes wrap and compact DNA into chromatin, limiting DNA accessibility to the cellular machineries which require DNA as a template. Histones thereby play a central role in transcription regulation, DNA repair, DNA replication and chromosomal stability. DNA accessibility is regulated via a complex set of post-translational modifications of histones, also called histone code, and nucleosome remodeling. In Parechinus angulosus (Angulate sea urchin), this protein is Histone H2B.1, sperm.